The primary structure comprises 350 residues: Protein Wnt-8b (350 aa).

The signal sequence occupies residues 1–21 (MFLMKPVCVLLVTCVLHRSHA). A disulfide bond links cysteine 53 and cysteine 64. The N-linked (GlcNAc...) asparagine glycan is linked to asparagine 102. 10 disulfide bridges follow: cysteine 103–cysteine 111, cysteine 113–cysteine 131, cysteine 179–cysteine 193, cysteine 181–cysteine 188, cysteine 255–cysteine 293, cysteine 271–cysteine 286, cysteine 290–cysteine 332, cysteine 308–cysteine 323, cysteine 310–cysteine 320, and cysteine 315–cysteine 316. A lipid anchor (O-palmitoleoyl serine) is attached at serine 185. An N-linked (GlcNAc...) asparagine glycan is attached at asparagine 258.

It belongs to the Wnt family. In terms of processing, palmitoleoylation is required for efficient binding to frizzled receptors. Depalmitoleoylation leads to Wnt signaling pathway inhibition. Proteolytic processing by TIKI1 and TIKI2 promotes oxidation and formation of large disulfide-bond oligomers, leading to inactivation of WNT8B.

The protein resides in the secreted. It is found in the extracellular space. Its subcellular location is the extracellular matrix. Ligand for members of the frizzled family of seven transmembrane receptors. May play an important role in the development and differentiation of certain forebrain structures, notably the hippocampus. The polypeptide is Protein Wnt-8b (Wnt8b) (Mus musculus (Mouse)).